A 411-amino-acid chain; its full sequence is Glycerol-3-phosphate dehydrogenase [NAD(+)] (411 aa).

NAD(+) contacts are provided by residues Gly-71 to Gly-76, Phe-103, and Phe-159. Lys-182 contacts substrate. Ala-215 provides a ligand contact to NAD(+). The active-site Proton acceptor is the Lys-275. The NAD(+) site is built by Arg-340 and Gln-369. Position 340–341 (Arg-340–Asn-341) interacts with substrate.

This sequence belongs to the NAD-dependent glycerol-3-phosphate dehydrogenase family.

It carries out the reaction sn-glycerol 3-phosphate + NAD(+) = dihydroxyacetone phosphate + NADH + H(+). This Lachancea thermotolerans (Yeast) protein is Glycerol-3-phosphate dehydrogenase [NAD(+)] (GPD).